Here is a 408-residue protein sequence, read N- to C-terminus: COP9 signalosome complex subunit 4 (408 aa).

The region spanning 194-374 (RIQDARRRFL…GIIYFESNTT (181 aa)) is the PCI domain.

This sequence belongs to the CSN4 family. Component of the COP9 signalosome (CSN) complex.

The protein resides in the cytoplasm. The protein localises to the nucleus. In terms of biological role, component of the COP9 signalosome (CSN) complex that acts as an regulator of the ubiquitin (Ubl) conjugation pathway by mediating the deneddylation of the cullin subunit of SCF-type E3 ubiquitin-protein ligase complexes. The CSN complex seems to link protein degradation to sexual development. Required for fruit body formation. This is COP9 signalosome complex subunit 4 (csnD) from Emericella nidulans (strain FGSC A4 / ATCC 38163 / CBS 112.46 / NRRL 194 / M139) (Aspergillus nidulans).